Consider the following 467-residue polypeptide: MSYSSFSIAQGSRVPSLSGTRSSSSYSLKSDLIPQSRRSHSVYGTPGSIRISSPSMPSAIVSSYSSTLSSALPSSSYGGNSYSSSTSFSSGGTDFLLGTSGKEAMQNLNDRLADYLARVRSLEDRNRELEQKIREWYEKQGAGTKRKDFSHYFKIIADLQNQINAGNMENARILLKIDNAKLAADDFKQKWEAEQALRLGVEADIHGLRKILDEMTLARTDLEMQIEGHKEEKAYLIKSHDEDMKALRSQLGGQVNVEVDAAPAEDLTKKLEIIRQRYEQLAEKNRKESEDWFIKKSEELNKNMASSTEALQTSKTEINELRRTIQGLEIELQSQQSMKGALEGQLADTEHRYSSTLMNLQNIINQKEAELSNIRADIESQASKYKILLDVKTRLENEISTYRTLLEGDAGRSHSSSHLSSTVSKDKVPVSSPNVITKVRTIVEEKINGQVISKKEYEGSPDQLSYY.

The interval 1–100 (MSYSSFSIAQ…GGTDFLLGTS (100 aa)) is head. A compositionally biased stretch (low complexity) spans 12-30 (SRVPSLSGTRSSSSYSLKS). A disordered region spans residues 12-32 (SRVPSLSGTRSSSSYSLKSDL). The coil 1A stretch occupies residues 101-137 (GKEAMQNLNDRLADYLARVRSLEDRNRELEQKIREWY). Positions 101–413 (GKEAMQNLND…TLLEGDAGRS (313 aa)) constitute an IF rod domain. Residues 138–156 (EKQGAGTKRKDFSHYFKII) are linker 1. The interval 157–248 (ADLQNQINAG…SHDEDMKALR (92 aa)) is coil 1B. Positions 249–268 (SQLGGQVNVEVDAAPAEDLT) are linker 12. The coil 2 stretch occupies residues 269–416 (KKLEIIRQRY…EGDAGRSHSS (148 aa)). The tract at residues 409-430 (DAGRSHSSSHLSSTVSKDKVPV) is disordered. The tail stretch occupies residues 417–463 (SHLSSTVSKDKVPVSSPNVITKVRTIVEEKINGQVISKKEYEGSPDQ).

Belongs to the intermediate filament family. As to quaternary structure, heterotetramer of two type I and two type II keratins. As to expression, expressed in the outermost cell layers of skin epidermis (at protein level).

The chain is Keratin, type 1 cytoskeletal 11 from Protopterus aethiopicus (Marbled lungfish).